The primary structure comprises 588 residues: Succinate dehydrogenase flavoprotein subunit (588 aa).

Residues G14–G19, S37–G52, and D221 contribute to the FAD site. Position 45 is a tele-8alpha-FAD histidine (H45). Substrate is bound by residues H242 and T254. R286 functions as the Proton acceptor in the catalytic mechanism. Residue H354 participates in substrate binding. E388 contacts FAD. Residue R399 coordinates substrate. S404–L405 is an FAD binding site.

This sequence belongs to the FAD-dependent oxidoreductase 2 family. FRD/SDH subfamily. As to quaternary structure, part of an enzyme complex containing four subunits: a flavoprotein, an iron-sulfur, cytochrome b-556, and a hydrophobic anchor protein. Requires FAD as cofactor.

It is found in the cell inner membrane. The catalysed reaction is a quinone + succinate = fumarate + a quinol. It participates in carbohydrate metabolism; tricarboxylic acid cycle; fumarate from succinate (bacterial route): step 1/1. In terms of biological role, two distinct, membrane-bound, FAD-containing enzymes are responsible for the catalysis of fumarate and succinate interconversion; the fumarate reductase is used in anaerobic growth, and the succinate dehydrogenase is used in aerobic growth. The polypeptide is Succinate dehydrogenase flavoprotein subunit (sdhA) (Salmonella typhimurium (strain LT2 / SGSC1412 / ATCC 700720)).